A 96-amino-acid polypeptide reads, in one-letter code: Uteroglobin (96 aa).

Residues 1–21 (MKIAITMAVVMLSVCCSSASS) form the signal peptide.

It belongs to the secretoglobin family. In terms of assembly, antiparallel homodimer; disulfide-linked. Interaction with LMBR1L is controversial.

The protein localises to the secreted. In terms of biological role, binds phosphatidylcholine, phosphatidylinositol, polychlorinated biphenyls (PCB) and weakly progesterone, potent inhibitor of phospholipase A2. In Mesocricetus auratus (Golden hamster), this protein is Uteroglobin (SCGB1A1).